The chain runs to 585 residues: Poly(A) RNA polymerase, mitochondrial (585 aa).

A mitochondrion-targeting transit peptide spans 1–37 (MAARGVGLLTRLPVCSQRRNRIPRSISRLLSCPGTIA). N6-acetyllysine is present on Lys90. Residues 107–109 (YES) and 244–245 (GC) each bind ATP. Mg(2+) is bound by residues Asp246 and Asp248. In terms of domain architecture, PAP-associated spans 441-486 (ELLIKEFFEYFGNFAFNKNSINIRQGREQNKPDSSPLYIQNPFETS). Residues 537-585 (PGSGHTSLSRKKKKKPMSEKVKGLLASIKSNSPDSSTDTSGKRTISTQA) form a disordered region. Residues 564–585 (IKSNSPDSSTDTSGKRTISTQA) show a composition bias toward polar residues.

It belongs to the DNA polymerase type-B-like family. In terms of assembly, homodimer. The cofactor is Mg(2+). Mn(2+) serves as cofactor.

Its subcellular location is the cytoplasm. It localises to the mitochondrion. It carries out the reaction RNA(n) + ATP = RNA(n)-3'-adenine ribonucleotide + diphosphate. In terms of biological role, polymerase that creates the 3' poly(A) tail of mitochondrial transcripts. Can use all four nucleotides, but has higher activity with ATP and UTP (in vitro). Plays a role in replication-dependent histone mRNA degradation. May be involved in the terminal uridylation of mature histone mRNAs before their degradation is initiated. Might be responsible for the creation of some UAA stop codons which are not encoded in mtDNA. In Mus musculus (Mouse), this protein is Poly(A) RNA polymerase, mitochondrial (Mtpap).